A 430-amino-acid chain; its full sequence is Potassium channel subfamily K member 12 (430 aa).

Over 1–38 (MSSRSPRPPPRRCRRRLPRPSCCCCCCRRSHLNEDTGR) the chain is Cytoplasmic. Positions 11 to 16 (RRCRRR) are ER retention/retrieval signal. Residues 39–59 (FVLLAALIGLYLVAGATVFSA) traverse the membrane as a helical segment. N78 carries N-linked (GlcNAc...) asparagine glycosylation. Residues 114–134 (WDFPGAFYFVGTVVSTIGFGM) constitute an intramembrane region (pore-forming). The K(+) site is built by T129, I130, and G131. Residues 129 to 134 (TIGFGM) are selectivity filter 1. Residues 145-165 (FLIAYGLFGCAGTILFFNLFL) traverse the membrane as a helical segment. Residues 166-212 (ERIISLLAFIMRACRERQLRRSGLLPATFRRGSALSEADSLAGWKPS) lie on the Cytoplasmic side of the membrane. The chain crosses the membrane as a helical span at residues 213-233 (VYHVLLILGLFAVLLACCASA). The segment at residues 243–263 (YVDSLYFCFVTFSTIGFGDLV) is an intramembrane region (pore-forming). 4 residues coordinate K(+): T256, I257, G258, and F259. The segment at 256-261 (TIGFGD) is selectivity filter 2. Residues 282-302 (LFILLGVCCIYSLFNVISILI) traverse the membrane as a helical segment. At 303 to 430 (KQVLNWMLRK…NRLAETSASR (128 aa)) the chain is on the cytoplasmic side.

It belongs to the two pore domain potassium channel (TC 1.A.1.8) family. As to quaternary structure, homodimer. Heterodimer with KCNK13. In terms of tissue distribution, highly expressed in most brain regions. Also expressed in other tissues such as lung, kidney, liver, stomach and spleen.

The protein localises to the cell membrane. It localises to the endoplasmic reticulum membrane. The catalysed reaction is K(+)(in) = K(+)(out). In terms of biological role, k(+) channel subunit that may homo- and heterodimerize to form functional channels with distinct regulatory and gating properties. Can heterodimerize with KCNK13 subunit to conduct K(+) outward rectifying currents at the plasma membrane. The homodimers are mainly retained in the endoplasmic reticulum compartment and may be targeted to the cell surface upon phosphorylation or other activation signals yet to be elucidated. This chain is Potassium channel subfamily K member 12 (Kcnk12), found in Rattus norvegicus (Rat).